Reading from the N-terminus, the 496-residue chain is Glutamyl-tRNA(Gln) amidotransferase subunit A (496 aa).

Residues Lys75 and Ser150 each act as charge relay system in the active site. The active-site Acyl-ester intermediate is Ser174.

This sequence belongs to the amidase family. GatA subfamily. In terms of assembly, heterotrimer of A, B and C subunits.

It catalyses the reaction L-glutamyl-tRNA(Gln) + L-glutamine + ATP + H2O = L-glutaminyl-tRNA(Gln) + L-glutamate + ADP + phosphate + H(+). Allows the formation of correctly charged Gln-tRNA(Gln) through the transamidation of misacylated Glu-tRNA(Gln) in organisms which lack glutaminyl-tRNA synthetase. The reaction takes place in the presence of glutamine and ATP through an activated gamma-phospho-Glu-tRNA(Gln). The polypeptide is Glutamyl-tRNA(Gln) amidotransferase subunit A (Burkholderia ambifaria (strain MC40-6)).